The chain runs to 254 residues: Triosephosphate isomerase (254 aa).

Position 12–14 (12–14) interacts with substrate; it reads NWK. Residue His-99 is the Electrophile of the active site. Glu-169 functions as the Proton acceptor in the catalytic mechanism. Residues Gly-175, Ser-214, and 235-236 contribute to the substrate site; that span reads GG.

Belongs to the triosephosphate isomerase family. In terms of assembly, homodimer.

The protein localises to the cytoplasm. The enzyme catalyses D-glyceraldehyde 3-phosphate = dihydroxyacetone phosphate. The protein operates within carbohydrate biosynthesis; gluconeogenesis. It functions in the pathway carbohydrate degradation; glycolysis; D-glyceraldehyde 3-phosphate from glycerone phosphate: step 1/1. In terms of biological role, involved in the gluconeogenesis. Catalyzes stereospecifically the conversion of dihydroxyacetone phosphate (DHAP) to D-glyceraldehyde-3-phosphate (G3P). In Bartonella henselae (strain ATCC 49882 / DSM 28221 / CCUG 30454 / Houston 1) (Rochalimaea henselae), this protein is Triosephosphate isomerase.